Reading from the N-terminus, the 355-residue chain is Protein RecA (355 aa).

An ATP-binding site is contributed by 65 to 72 (GPESSGKT).

It belongs to the RecA family.

The protein resides in the cytoplasm. In terms of biological role, can catalyze the hydrolysis of ATP in the presence of single-stranded DNA, the ATP-dependent uptake of single-stranded DNA by duplex DNA, and the ATP-dependent hybridization of homologous single-stranded DNAs. It interacts with LexA causing its activation and leading to its autocatalytic cleavage. In Pseudomonas entomophila (strain L48), this protein is Protein RecA.